The chain runs to 201 residues: HTH-type transcriptional regulator Hpr (201 aa).

The region spanning 13 to 157 (AMLFSQRIAQ…MMCIIRNIYG (145 aa)) is the HTH marR-type domain. Positions 63–86 (ISEIAKFGVMHVSTAFNFSKKLEE) form a DNA-binding region, H-T-H motif.

As to quaternary structure, homodimer.

Negative regulator of protease production and sporulation. This chain is HTH-type transcriptional regulator Hpr, found in Geobacillus sp. (strain WCH70).